A 254-amino-acid polypeptide reads, in one-letter code: Isoprenyl transferase (254 aa).

D24 is an active-site residue. D24 contacts Mg(2+). Residues G25–R28, W29, R37, H41, and S69–E71 each bind substrate. Catalysis depends on N72, which acts as the Proton acceptor. Residues W73, R75, R192, and R198–S200 contribute to the substrate site. Position 211 (E211) interacts with Mg(2+).

The protein belongs to the UPP synthase family. Homodimer. Mg(2+) is required as a cofactor.

Its function is as follows. Catalyzes the condensation of isopentenyl diphosphate (IPP) with allylic pyrophosphates generating different type of terpenoids. In Bordetella parapertussis (strain 12822 / ATCC BAA-587 / NCTC 13253), this protein is Isoprenyl transferase.